Consider the following 909-residue polypeptide: MSTKVKKCREPARVTLPAPEEEDGEAEGAEPQRRRRGWRGVNGGLEPPCPRAPPSPGPDASSEGSPSRWRTAGMRDKGRRQAVRGPAFMFGARGPSLTAEEERFLDAAEYGNIPVVRKMLEESRTLNVNCVDYMGQNALQLAVGNEHLEVTELLLKKENLARIGDALLLAISKGYVRIVEAILGHPGFAASRRLTLSPCEQELRDDDFYAYDEDGTRFSPDITPIILAAHCHKYEVVHLLLLKGARIERPHDYFCRCADCAEKQRLDAFSHSRSRINAYKGLASPAYLSLSSEDPVLTALELSNELAKLANIEKEFKNDYRKLSMQCKDFVVGVLDLCRDSEEVEAILNGDLESVEPLERHGHKASLSRVKLAIKYEVKKFVAHPNCQQQLLTIWYENLSGLREQTIAIKCLVVLVVALGLPFLAIGYWIAPCSRLGKILRSPFMKFVAHAASFIIFLGLLVFNASDRFEGITTLPNITVIDYPKQIFRVKTTQFTWTEMLIMVWVLGMMWSECKELWLEGPREYIVQLWNVLDFGMLSIFIAAFTARFLAFLQATKAQQYVDSHVQESDLSEVTLPPEVQYFTYARDKWLPSDPQIISEGLYAIAVVLSFSRIAYILPANESFGPLQISLGRTVKDIFKFMVLFIMVFLAFMIGMFILYSYYLGAKVNPAFTTVEESFKTLFWSIFGLSEVTSVVLKYDHKFIENIGYVLYGIYNVTMVVVLLNMLIAMINSSYQEIEDDSDVEWKFARSKLWLSYFDDGKTLPPPFSLVPSPKSFVYFIMRITNFSKCRRRRLQKDLELGMGNSKSRLNLFTQSNSRVFESHSFNSILNQPTRYQQIMKRLIKRYVLKAQVDKENDEVNEGELKEIKQDISSLRYELLEDKSQATEELAILIHKLSEKLNPSALRCE.

Positions 1-92 are disordered; it reads MSTKVKKCRE…VRGPAFMFGA (92 aa). Over 1 to 447 the chain is Cytoplasmic; that stretch reads MSTKVKKCRE…KILRSPFMKF (447 aa). Residues 19-28 are compositionally biased toward acidic residues; it reads PEEEDGEAEG. Positions 47–57 are enriched in pro residues; that stretch reads PPCPRAPPSPG. Low complexity predominate over residues 58-67; that stretch reads PDASSEGSPS. ANK repeat units lie at residues 99 to 128, 134 to 163, 165 to 191, and 220 to 249; these read AEEE…TLNV, MGQN…LARI, DALL…FAAS, and PDIT…RIER. Ca(2+) is bound at residue glutamate 146. A helical membrane pass occupies residues 448 to 465; the sequence is VAHAASFIIFLGLLVFNA. At 466–496 the chain is on the extracellular side; the sequence is SDRFEGITTLPNITVIDYPKQIFRVKTTQFT. An N-linked (GlcNAc...) asparagine glycan is attached at asparagine 477. Residues 497 to 515 form a helical membrane-spanning segment; sequence WTEMLIMVWVLGMMWSECK. Glutamate 513, glutamate 516, and asparagine 531 together coordinate Ca(2+). Over 516–528 the chain is Cytoplasmic; it reads ELWLEGPREYIVQ. The chain crosses the membrane as a helical span at residues 529–550; sequence LWNVLDFGMLSIFIAAFTARFL. Residues 551–594 lie on the Extracellular side of the membrane; that stretch reads AFLQATKAQQYVDSHVQESDLSEVTLPPEVQYFTYARDKWLPSD. The chain crosses the membrane as a helical span at residues 595 to 618; it reads PQIISEGLYAIAVVLSFSRIAYIL. Residues 619–637 are Cytoplasmic-facing; the sequence is PANESFGPLQISLGRTVKD. Residues 622-651 form an ANK 5 repeat; the sequence is ESFGPLQISLGRTVKDIFKFMVLFIMVFLA. The chain crosses the membrane as a helical span at residues 638-661; the sequence is IFKFMVLFIMVFLAFMIGMFILYS. Over 662-701 the chain is Extracellular; the sequence is YYLGAKVNPAFTTVEESFKTLFWSIFGLSEVTSVVLKYDH. The chain crosses the membrane as a helical span at residues 702–727; that stretch reads KFIENIGYVLYGIYNVTMVVVLLNML. The Cytoplasmic segment spans residues 728–909; sequence IAMINSSYQE…KLNPSALRCE (182 aa). Ca(2+) is bound by residues glutamate 859, glutamate 862, glutamate 864, and aspartate 871.

The protein belongs to the transient receptor (TC 1.A.4) family. STrpC subfamily. TRPC3 sub-subfamily. Homotetramer. Interacts with ITPR1, ITPR3, MX1 and RNF24. Interacts with JPH2; the interaction is involved in maintaining Ca(2+) homeostasis in skeletal muscle and is mediated by JPH2 'Ser-165' phosphorylation.

The protein localises to the cell membrane. It catalyses the reaction Ca(2+)(in) = Ca(2+)(out). Its activity is regulated as follows. Activated by diacylglycerol (DAG) in a membrane-delimited fashion, independently of protein kinase C. Activated by inositol 1,4,5-triphosphate receptors (ITPR) with bound IP3. May be activated by internal calcium store depletion. Inhibited by intracellular Ca(2+). Functionally, forms a receptor-activated non-selective calcium permeant cation channel. May be operated by a phosphatidylinositol second messenger system activated by receptor tyrosine kinases or G-protein coupled receptors. The chain is Short transient receptor potential channel 3 (Trpc3) from Rattus norvegicus (Rat).